Here is a 294-residue protein sequence, read N- to C-terminus: Elongation factor Ts (294 aa).

The interval 79–82 is involved in Mg(2+) ion dislocation from EF-Tu; that stretch reads TDFV.

This sequence belongs to the EF-Ts family.

Its subcellular location is the cytoplasm. Its function is as follows. Associates with the EF-Tu.GDP complex and induces the exchange of GDP to GTP. It remains bound to the aminoacyl-tRNA.EF-Tu.GTP complex up to the GTP hydrolysis stage on the ribosome. The chain is Elongation factor Ts from Geobacillus sp. (strain WCH70).